Consider the following 400-residue polypeptide: Acetate kinase (400 aa).

Asparagine 10 contacts Mg(2+). Lysine 17 lines the ATP pocket. Residue arginine 91 coordinates substrate. Aspartate 150 (proton donor/acceptor) is an active-site residue. Residues 210–214, 285–287, and 333–337 each bind ATP; these read HLGSG, DCR, and GIGEN. Position 387 (glutamate 387) interacts with Mg(2+).

Belongs to the acetokinase family. In terms of assembly, homodimer. It depends on Mg(2+) as a cofactor. The cofactor is Mn(2+).

Its subcellular location is the cytoplasm. It catalyses the reaction acetate + ATP = acetyl phosphate + ADP. Its pathway is metabolic intermediate biosynthesis; acetyl-CoA biosynthesis; acetyl-CoA from acetate: step 1/2. Catalyzes the formation of acetyl phosphate from acetate and ATP. Can also catalyze the reverse reaction. This chain is Acetate kinase, found in Baumannia cicadellinicola subsp. Homalodisca coagulata.